A 422-amino-acid chain; its full sequence is Adenylosuccinate synthetase (422 aa).

GTP contacts are provided by residues 11–17 and 39–41; these read GDEGKGK and GHT. The active-site Proton acceptor is the Asp12. Residues Asp12 and Gly39 each contribute to the Mg(2+) site. Residues 12 to 15, 37 to 40, Thr129, Arg143, Asn219, Thr234, and Arg298 each bind IMP; these read DEGK and NAGH. His40 functions as the Proton donor in the catalytic mechanism. 294 to 300 is a substrate binding site; sequence VTTGRRR. GTP is bound by residues Arg300, 326-328, and 409-411; these read KLD and GTG.

The protein belongs to the adenylosuccinate synthetase family. Homodimer. Mg(2+) serves as cofactor.

Its subcellular location is the cytoplasm. The enzyme catalyses IMP + L-aspartate + GTP = N(6)-(1,2-dicarboxyethyl)-AMP + GDP + phosphate + 2 H(+). The protein operates within purine metabolism; AMP biosynthesis via de novo pathway; AMP from IMP: step 1/2. Functionally, plays an important role in the de novo pathway and in the salvage pathway of purine nucleotide biosynthesis. Catalyzes the first committed step in the biosynthesis of AMP from IMP. This Ajellomyces capsulatus (strain H143) (Darling's disease fungus) protein is Adenylosuccinate synthetase.